Reading from the N-terminus, the 354-residue chain is Rhodopsin (354 aa).

The Extracellular segment spans residues 1–36 (MNGTEGPYFYIPMVNTTGIVRSPYEYPQYYLVNPAA). N-linked (GlcNAc...) asparagine glycans are attached at residues N2 and N15. A helical membrane pass occupies residues 37–61 (YAALGAYMFFLILLGFPINFLTLYV). Residues 62-73 (TLEHKKLRTPLN) lie on the Cytoplasmic side of the membrane. A helical membrane pass occupies residues 74–96 (YILLNLAVADLFMVFGGFTTTMY). Residues 97 to 110 (TSMHGYFVLGRLGC) are Extracellular-facing. Residues C110 and C187 are joined by a disulfide bond. Residues 111–133 (NLEGFFATLGGEIGLWSLVVLAI) form a helical membrane-spanning segment. The 'Ionic lock' involved in activated form stabilization signature appears at 134–136 (ERW). Residues 134 to 152 (ERWVVVCKPISNFRFGENH) are Cytoplasmic-facing. Residues 153–173 (AIMGLAFTWIMACACAVPPLV) traverse the membrane as a helical segment. At 174 to 202 (GWSRYIPEGMQCSCGVDYYTRAEGFNNES) the chain is on the extracellular side. Residue N200 is glycosylated (N-linked (GlcNAc...) asparagine). A helical transmembrane segment spans residues 203-224 (FVVYMFTCHFCIPLTIIGFCYG). At 225-252 (RLLCAVKEAAAAQQESETTQRAEREVTR) the chain is on the cytoplasmic side. Residues 253-274 (MVILMVVGFLVCWLPYASVAWY) form a helical membrane-spanning segment. The Extracellular portion of the chain corresponds to 275–286 (IFSNQGSQFGPL). The helical transmembrane segment at 287–308 (FMTIPAFFAKSSSVYNPMIYIC) threads the bilayer. K296 is subject to N6-(retinylidene)lysine. The Cytoplasmic segment spans residues 309–354 (MNKQFRHCMITTLCCGKNPFEEEEGASTTASKTEASSVSSSSVSPA). S-palmitoyl cysteine attachment occurs at residues C322 and C323. The disordered stretch occupies residues 333-354 (GASTTASKTEASSVSSSSVSPA). The segment covering 334-354 (ASTTASKTEASSVSSSSVSPA) has biased composition (low complexity).

This sequence belongs to the G-protein coupled receptor 1 family. Opsin subfamily. In terms of processing, phosphorylated on some or all of the serine and threonine residues present in the C-terminal region. Post-translationally, contains one covalently linked retinal chromophore.

The protein localises to the membrane. Its subcellular location is the cell projection. The protein resides in the cilium. It localises to the photoreceptor outer segment. In terms of biological role, photoreceptor required for image-forming vision at low light intensity. While most salt water fish species use retinal as chromophore, most freshwater fish use 3-dehydroretinal, or a mixture of retinal and 3-dehydroretinal. Light-induced isomerization of 11-cis to all-trans retinal triggers a conformational change that activates signaling via G-proteins. Subsequent receptor phosphorylation mediates displacement of the bound G-protein alpha subunit by arrestin and terminates signaling. The polypeptide is Rhodopsin (rho) (Salaria pavo (Peacock blenny)).